We begin with the raw amino-acid sequence, 86 residues long: DNA-directed RNA polymerase subunit omega (86 aa).

This sequence belongs to the RNA polymerase subunit omega family. The RNAP catalytic core consists of 2 alpha, 1 beta, 1 beta' and 1 omega subunit. When a sigma factor is associated with the core the holoenzyme is formed, which can initiate transcription.

The catalysed reaction is RNA(n) + a ribonucleoside 5'-triphosphate = RNA(n+1) + diphosphate. Functionally, promotes RNA polymerase assembly. Latches the N- and C-terminal regions of the beta' subunit thereby facilitating its interaction with the beta and alpha subunits. In Agathobacter rectalis (strain ATCC 33656 / DSM 3377 / JCM 17463 / KCTC 5835 / VPI 0990) (Eubacterium rectale), this protein is DNA-directed RNA polymerase subunit omega.